The sequence spans 633 residues: Pollen receptor-like kinase 3 (633 aa).

Positions 1–19 (MTAVLFLCFLLICFSFTPS) are cleaved as a signal peptide. N-linked (GlcNAc...) asparagine glycans are attached at residues Asn22 and Asn37. A disulfide bridge links Cys53 with Cys62. 5 LRR repeats span residues 90–115 (LPNLRTIRLDNNLLSGPLPPFFKLPG), 117–137 (KSLLLSNNSFSGEIADDFFKE), 138–162 (TPQLKRVFLDNNRLSGKIPASLMQL), 163–186 (AGLEELHMQGNQFTGEIPPLTDGN), and 188–210 (VLKSLDLSNNDLEGEIPITISDR). The N-linked (GlcNAc...) asparagine glycan is linked to Asn123. Cysteines 224 and 232 form a disulfide. Residue Asn246 is glycosylated (N-linked (GlcNAc...) asparagine). Residues 249-269 (AKAIFMVILFLLIFLFVVAII) traverse the membrane as a helical segment. The span at 294-314 (VEVRVPDSIKKPIDSSKKRSN) shows a compositional bias: basic and acidic residues. The segment at 294–339 (VEVRVPDSIKKPIDSSKKRSNAEGSSKKGSSHNGKGAGGGPGSGMG) is disordered. Over residues 328-338 (KGAGGGPGSGM) the composition is skewed to gly residues. Positions 358 to 633 (KAAAEVLGNG…IVRRIERVTL (276 aa)) constitute a Protein kinase domain. ATP-binding positions include 364–372 (LGNGSLGSA) and Lys386. Ser438 is modified (phosphoserine). Thr458 bears the Phosphothreonine mark. Ser535 carries the phosphoserine modification.

The protein belongs to the protein kinase superfamily. Ser/Thr protein kinase family. In terms of assembly, interacts in vitro with ROPGEF1 (via PRONE domain). Interacts with PRK6. Expressed in pollen and/or in flowers, but not in leaves.

The protein resides in the membrane. The enzyme catalyses L-seryl-[protein] + ATP = O-phospho-L-seryl-[protein] + ADP + H(+). It catalyses the reaction L-threonyl-[protein] + ATP = O-phospho-L-threonyl-[protein] + ADP + H(+). With respect to regulation, the phosphorylation activity is calcium-independent. Functionally, receptor-like kinase involved in the control of pollen germination and pollen tube polar growth. Can phosphorylate ROPGEF1 in vitro. This is Pollen receptor-like kinase 3 from Arabidopsis thaliana (Mouse-ear cress).